The chain runs to 102 residues: Small ribosomal subunit protein uS10 (102 aa).

This sequence belongs to the universal ribosomal protein uS10 family. As to quaternary structure, part of the 30S ribosomal subunit.

Functionally, involved in the binding of tRNA to the ribosomes. This is Small ribosomal subunit protein uS10 from Methanoculleus marisnigri (strain ATCC 35101 / DSM 1498 / JR1).